The sequence spans 62 residues: Photosystem II reaction center protein Z (62 aa).

2 helical membrane-spanning segments follow: residues 8–28 (AVFA…VVFA) and 41–61 (FSGT…NSLI).

Belongs to the PsbZ family. As to quaternary structure, PSII is composed of 1 copy each of membrane proteins PsbA, PsbB, PsbC, PsbD, PsbE, PsbF, PsbH, PsbI, PsbJ, PsbK, PsbL, PsbM, PsbT, PsbY, PsbZ, Psb30/Ycf12, at least 3 peripheral proteins of the oxygen-evolving complex and a large number of cofactors. It forms dimeric complexes.

Its subcellular location is the plastid. The protein localises to the chloroplast thylakoid membrane. May control the interaction of photosystem II (PSII) cores with the light-harvesting antenna, regulates electron flow through the 2 photosystem reaction centers. PSII is a light-driven water plastoquinone oxidoreductase, using light energy to abstract electrons from H(2)O, generating a proton gradient subsequently used for ATP formation. The chain is Photosystem II reaction center protein Z from Pisum sativum (Garden pea).